We begin with the raw amino-acid sequence, 585 residues long: Arginine--tRNA ligase (585 aa).

The short motif at 131 to 141 (ANPTGPMHVGH) is the 'HIGH' region element.

The protein belongs to the class-I aminoacyl-tRNA synthetase family. Monomer.

The protein localises to the cytoplasm. The enzyme catalyses tRNA(Arg) + L-arginine + ATP = L-arginyl-tRNA(Arg) + AMP + diphosphate. In Brucella abortus (strain S19), this protein is Arginine--tRNA ligase.